Here is a 154-residue protein sequence, read N- to C-terminus: Putative pre-16S rRNA nuclease (154 aa).

Belongs to the YqgF nuclease family.

It is found in the cytoplasm. Could be a nuclease involved in processing of the 5'-end of pre-16S rRNA. The sequence is that of Putative pre-16S rRNA nuclease from Pelotomaculum thermopropionicum (strain DSM 13744 / JCM 10971 / SI).